Here is a 329-residue protein sequence, read N- to C-terminus: DNA-directed RNA polymerase subunit alpha (329 aa).

The tract at residues methionine 1–arginine 235 is alpha N-terminal domain (alpha-NTD). Positions phenylalanine 249–glutamate 329 are alpha C-terminal domain (alpha-CTD).

Belongs to the RNA polymerase alpha chain family. As to quaternary structure, homodimer. The RNAP catalytic core consists of 2 alpha, 1 beta, 1 beta' and 1 omega subunit. When a sigma factor is associated with the core the holoenzyme is formed, which can initiate transcription.

The catalysed reaction is RNA(n) + a ribonucleoside 5'-triphosphate = RNA(n+1) + diphosphate. Its function is as follows. DNA-dependent RNA polymerase catalyzes the transcription of DNA into RNA using the four ribonucleoside triphosphates as substrates. The sequence is that of DNA-directed RNA polymerase subunit alpha from Pectobacterium atrosepticum (strain SCRI 1043 / ATCC BAA-672) (Erwinia carotovora subsp. atroseptica).